Reading from the N-terminus, the 641-residue chain is Choline O-acetyltransferase (641 aa).

Residues 1 to 29 (MPILEKTPPKMAAKSPSSEEEPGLPKLPV) are disordered. Serine 17 carries the phosphoserine modification. The Proton acceptor role is filled by histidine 335. Phosphoserine is present on serine 366. CoA-binding positions include 413 to 425 (GKTFIKQQKCSPD), serine 451, and glutamine 552. A disordered region spans residues 619–641 (QSGMGKPLATKEKVTRPSQVHQP).

It belongs to the carnitine/choline acetyltransferase family.

The enzyme catalyses choline + acetyl-CoA = acetylcholine + CoA. Its function is as follows. Catalyzes the reversible synthesis of acetylcholine (ACh) from acetyl CoA and choline at cholinergic synapses. The chain is Choline O-acetyltransferase (CHAT) from Sus scrofa (Pig).